A 430-amino-acid chain; its full sequence is MDCDIFLVGLNHRTAGVDVRERFALANHCDEEHWALPCTGAVSESIILSTCNRVEILAAGTGEVAEQVLRNWAGARKSDVEDLRPYVYVHKNLEAVRHLFSVASSLDSMVLGEPQILGQLKTAYRKAVKSRATGVILNRLLHKAFSVAKRVRTETAVASSAVSISYAAVELAKRIFGDMRAHKAMLVGAGEMAELAAMHLLQAGIADILVANRTLVRGQELAKQFNGHAIPFEDMPRHLLDVDIIITSTGSQEPIIRARDIRAALKIRKNRPMFFIDIAVPRDIDPDVNGLDNVYLYDIDDLKEVVEENLATRRDEAAKAAEIVNEEVVQFSRWLASLDMQPTIVDLIKKGQRAAEEELAKTLKRLGPVDDNTREALEAMAGALVRKLNHDPIMFLKHGGMSQEGNGPRISIMRRIFNLDKTGCIYSEEN.

Residues 50 to 53 (TCNR), Ser-108, 113 to 115 (EPQ), and Gln-119 each bind substrate. Catalysis depends on Cys-51, which acts as the Nucleophile. Residue 188-193 (GAGEMA) coordinates NADP(+).

Belongs to the glutamyl-tRNA reductase family. Homodimer.

The catalysed reaction is (S)-4-amino-5-oxopentanoate + tRNA(Glu) + NADP(+) = L-glutamyl-tRNA(Glu) + NADPH + H(+). The protein operates within porphyrin-containing compound metabolism; protoporphyrin-IX biosynthesis; 5-aminolevulinate from L-glutamyl-tRNA(Glu): step 1/2. Functionally, catalyzes the NADPH-dependent reduction of glutamyl-tRNA(Glu) to glutamate 1-semialdehyde (GSA). The chain is Glutamyl-tRNA reductase from Desulfovibrio desulfuricans (strain ATCC 27774 / DSM 6949 / MB).